The following is a 263-amino-acid chain: L-histidine 2-aminobutanoyltransferase (263 aa).

It belongs to the methyltransferase superfamily. CntL family. In terms of assembly, interacts with CntM.

The catalysed reaction is L-histidine + S-adenosyl-L-methionine = (2S)-2-amino-4-{[(1S)-1-carboxy-2-(1H-imidazol-4-yl)ethyl]amino}butanoate + S-methyl-5'-thioadenosine + H(+). Functionally, catalyzes the nucleophilic attack of one alpha-aminobutanoate moiety from SAM onto L-histidine to produce the intermediate (2S)-2-amino-4-{[(1S)-1-carboxy-2-(1H-imidazol-4-yl)ethyl]amino}butanoate. Functions in the biosynthesis of the metallophore pseudopaline, which is involved in the acquisition of nickel and zinc, and thus enables bacterial growth inside the host, where metal access is limited. Therefore, this enzyme probably contributes to Pseudomonas virulence. Cannot use D-histidine in place of L-histidine as substrate. This Pseudomonas aeruginosa (strain UCBPP-PA14) protein is L-histidine 2-aminobutanoyltransferase.